Consider the following 396-residue polypeptide: Elongation factor Tu (396 aa).

Positions 10 to 206 (KPHVNVGTIG…VLDTYIPEPE (197 aa)) constitute a tr-type G domain. The segment at 19-26 (GHVDHGKT) is G1. 19–26 (GHVDHGKT) is a binding site for GTP. Residue Thr26 coordinates Mg(2+). The segment at 60-64 (GITIN) is G2. The segment at 81–84 (DCPG) is G3. GTP-binding positions include 81 to 85 (DCPGH) and 136 to 139 (NKCD). Residues 136 to 139 (NKCD) are G4. Residues 174–176 (SAT) are G5.

This sequence belongs to the TRAFAC class translation factor GTPase superfamily. Classic translation factor GTPase family. EF-Tu/EF-1A subfamily. Monomer.

The protein localises to the cytoplasm. The catalysed reaction is GTP + H2O = GDP + phosphate + H(+). Functionally, GTP hydrolase that promotes the GTP-dependent binding of aminoacyl-tRNA to the A-site of ribosomes during protein biosynthesis. This chain is Elongation factor Tu, found in Psychrobacter arcticus (strain DSM 17307 / VKM B-2377 / 273-4).